We begin with the raw amino-acid sequence, 480 residues long: Ribosomal RNA small subunit methyltransferase F (480 aa).

S-adenosyl-L-methionine is bound by residues 125-131, Glu-149, Asp-176, and Asp-194; that span reads AAAPGSK. The active-site Nucleophile is the Cys-247.

It belongs to the class I-like SAM-binding methyltransferase superfamily. RsmB/NOP family.

The protein resides in the cytoplasm. The enzyme catalyses cytidine(1407) in 16S rRNA + S-adenosyl-L-methionine = 5-methylcytidine(1407) in 16S rRNA + S-adenosyl-L-homocysteine + H(+). Its function is as follows. Specifically methylates the cytosine at position 1407 (m5C1407) of 16S rRNA. This is Ribosomal RNA small subunit methyltransferase F from Enterobacter sp. (strain 638).